The primary structure comprises 119 residues: Large ribosomal subunit protein bL20 (119 aa).

Belongs to the bacterial ribosomal protein bL20 family.

Its function is as follows. Binds directly to 23S ribosomal RNA and is necessary for the in vitro assembly process of the 50S ribosomal subunit. It is not involved in the protein synthesizing functions of that subunit. The sequence is that of Large ribosomal subunit protein bL20 from Clostridium beijerinckii (strain ATCC 51743 / NCIMB 8052) (Clostridium acetobutylicum).